A 1723-amino-acid polypeptide reads, in one-letter code: Lys-gingipain HG66 (1723 aa).

Residues 1-24 (MRKLLLLIAASLLGVGLYAQNAKI) form the signal peptide. A propeptide spanning residues 25–228 (KLDAPTTRTT…ETAYKQLFNR (204 aa)) is cleaved from the precursor. The Ca(2+) site is built by D313, D337, D339, F341, and E343. H444 acts as the Proton donor in catalysis. C477 serves as the catalytic Nucleophile. The Ca(2+) site is built by F482 and E491. The disordered stretch occupies residues 965–985 (DAPNGTPNPNPNPNPGTTTLS). 11 residues coordinate Ca(2+): S987, E989, D1000, D1002, D1004, H1006, S1021, G1023, N1042, D1145, and E1146.

It belongs to the peptidase C25 family. In terms of processing, proteolytically cleaved into a catalytic subunit and three adhesins. Arg-gingipain is involved in this post-translational processing.

It localises to the secreted. It catalyses the reaction Endopeptidase with strict specificity for lysyl bonds.. Its function is as follows. Cysteine proteinase with a strong preference for substrates with Lys in the P1 position. Hydrolyzes bovine hemoglobin, bovine serum albumin, casein, human placental type I collagen and human IgA and IgG. Disrupts the functions of polymorphonuclear leukocytes. May act as a virulence factor in the development of peridontal disease. Involved in the coaggregation of P.gingivalis with other oral bacteria. The sequence is that of Lys-gingipain HG66 from Porphyromonas gingivalis (Bacteroides gingivalis).